We begin with the raw amino-acid sequence, 207 residues long: Cytochrome bo(3) ubiquinol oxidase subunit 3 (207 aa).

At 1 to 26 (MSSQVMHGAAHGHDHGHDDHHHDSGQ) the chain is on the cytoplasmic side. The helical transmembrane segment at 27 to 47 (MTVLGFWLYLMTDCILFASLF) threads the bilayer. The Periplasmic segment spans residues 48–70 (ATYAVLSGSFAGGPSGHDIFQLD). A helical membrane pass occupies residues 71–91 (FVAVETLFLLLSSITFGFAML). The Cytoplasmic portion of the chain corresponds to 92-99 (KMFDGKKA). A helical membrane pass occupies residues 100 to 120 (GVLGWLAVTFLFGAGFIAMEI). At 121–141 (YEFHHLIAEGFGPQRSGFLSG) the chain is on the periplasmic side. Residues 142–162 (FFALVGTHGLHVTAGLIWMAI) form a helical membrane-spanning segment. Residues 163-185 (MMYQINKHGITPTAKTRMSCLSL) are Cytoplasmic-facing. A helical transmembrane segment spans residues 186–206 (FWHFLDVVWICVFTVVYLLGV). Residue leucine 207 is a topological domain, periplasmic.

Belongs to the cytochrome c oxidase subunit 3 family. Heterooctamer of two A chains, two B chains, two C chains and two D chains.

It localises to the cell inner membrane. Functionally, cytochrome bo(3) ubiquinol terminal oxidase is the component of the aerobic respiratory chain of E.coli that predominates when cells are grown at high aeration. Has proton pump activity across the membrane in addition to electron transfer, pumping 2 protons/electron. This is Cytochrome bo(3) ubiquinol oxidase subunit 3 (cyoC) from Pseudomonas putida (Arthrobacter siderocapsulatus).